The sequence spans 140 residues: Holo-[acyl-carrier-protein] synthase (140 aa).

Residues aspartate 8 and glutamate 62 each contribute to the Mg(2+) site.

This sequence belongs to the P-Pant transferase superfamily. AcpS family. Mg(2+) is required as a cofactor.

The protein localises to the cytoplasm. It catalyses the reaction apo-[ACP] + CoA = holo-[ACP] + adenosine 3',5'-bisphosphate + H(+). Its function is as follows. Transfers the 4'-phosphopantetheine moiety from coenzyme A to a Ser of acyl-carrier-protein. This chain is Holo-[acyl-carrier-protein] synthase, found in Cupriavidus necator (strain ATCC 17699 / DSM 428 / KCTC 22496 / NCIMB 10442 / H16 / Stanier 337) (Ralstonia eutropha).